Reading from the N-terminus, the 232-residue chain is Putative N-acetylmannosamine-6-phosphate 2-epimerase (232 aa).

This sequence belongs to the NanE family.

The enzyme catalyses an N-acyl-D-glucosamine 6-phosphate = an N-acyl-D-mannosamine 6-phosphate. It functions in the pathway amino-sugar metabolism; N-acetylneuraminate degradation; D-fructose 6-phosphate from N-acetylneuraminate: step 3/5. Its function is as follows. Converts N-acetylmannosamine-6-phosphate (ManNAc-6-P) to N-acetylglucosamine-6-phosphate (GlcNAc-6-P). The protein is Putative N-acetylmannosamine-6-phosphate 2-epimerase of Borreliella burgdorferi (strain ZS7) (Borrelia burgdorferi).